The following is a 573-amino-acid chain: Eukaryotic translation initiation factor 3 subunit D (573 aa).

Residues 111–162 (VFTRGGRGQRGARGTERGGRAQLSRGRGGQYGGGYDRGGRSAAGGRGGRRFG) are disordered. Gly residues predominate over residues 136–156 (GRGGQYGGGYDRGGRSAAGGR). The tract at residues 301–315 (ALDMVTVNENAVDAP) is RNA gate. Positions 552–573 (PAGGLDEEEDNGDLGQEEDDEE) are disordered. Residues 556–573 (LDEEEDNGDLGQEEDDEE) show a composition bias toward acidic residues.

It belongs to the eIF-3 subunit D family. As to quaternary structure, component of the eukaryotic translation initiation factor 3 (eIF-3) complex.

Its subcellular location is the cytoplasm. In terms of biological role, mRNA cap-binding component of the eukaryotic translation initiation factor 3 (eIF-3) complex, which is involved in protein synthesis of a specialized repertoire of mRNAs and, together with other initiation factors, stimulates binding of mRNA and methionyl-tRNAi to the 40S ribosome. The eIF-3 complex specifically targets and initiates translation of a subset of mRNAs involved in cell proliferation. In the eIF-3 complex, eif3d specifically recognizes and binds the 7-methylguanosine cap of a subset of mRNAs. In Pyricularia oryzae (strain 70-15 / ATCC MYA-4617 / FGSC 8958) (Rice blast fungus), this protein is Eukaryotic translation initiation factor 3 subunit D.